Reading from the N-terminus, the 213-residue chain is Octanoyltransferase (213 aa).

The BPL/LPL catalytic domain maps to 32-207 (DSTLDEIWLV…NILALLNNPD (176 aa)). Substrate contacts are provided by residues 71-78 (RGGQVTYH), 138-140 (SLG), and 151-153 (GLA). Catalysis depends on C169, which acts as the Acyl-thioester intermediate.

Belongs to the LipB family.

It is found in the cytoplasm. It catalyses the reaction octanoyl-[ACP] + L-lysyl-[protein] = N(6)-octanoyl-L-lysyl-[protein] + holo-[ACP] + H(+). It functions in the pathway protein modification; protein lipoylation via endogenous pathway; protein N(6)-(lipoyl)lysine from octanoyl-[acyl-carrier-protein]: step 1/2. Its function is as follows. Catalyzes the transfer of endogenously produced octanoic acid from octanoyl-acyl-carrier-protein onto the lipoyl domains of lipoate-dependent enzymes. Lipoyl-ACP can also act as a substrate although octanoyl-ACP is likely to be the physiological substrate. The protein is Octanoyltransferase of Escherichia coli O8 (strain IAI1).